The chain runs to 376 residues: GDSL esterase/lipase 2 (376 aa).

Positions Met1 to Cys25 are cleaved as a signal peptide. N-linked (GlcNAc...) asparagine glycosylation occurs at Asn36. Residue Ser46 is the Nucleophile of the active site. N-linked (GlcNAc...) asparagine glycans are attached at residues Asn186 and Asn205. Residues Asp340 and His343 contribute to the active site. Residue Asn362 is glycosylated (N-linked (GlcNAc...) asparagine).

It belongs to the 'GDSL' lipolytic enzyme family. As to expression, expressed seedlings, roots and stems.

The protein localises to the secreted. Involved in the resistance to the necrotropic bacteria Erwinia carotovora, probably via negative regulation of auxin signaling. Possesses lipase and antimicrobial activities, inhibiting germination of fungal spores (e.g. Alternaria brassicicola). In Arabidopsis thaliana (Mouse-ear cress), this protein is GDSL esterase/lipase 2 (GLIP2).